The chain runs to 329 residues: Glycerol-3-phosphate dehydrogenase [NAD(P)+] (329 aa).

Residues S13, W14, H34, and K105 each contribute to the NADPH site. Sn-glycerol 3-phosphate-binding residues include K105, G134, and S136. A138 contacts NADPH. Sn-glycerol 3-phosphate is bound by residues K189, D242, S252, R253, and N254. K189 functions as the Proton acceptor in the catalytic mechanism. R253 lines the NADPH pocket. The NADPH site is built by V277 and E279.

This sequence belongs to the NAD-dependent glycerol-3-phosphate dehydrogenase family.

Its subcellular location is the cytoplasm. It catalyses the reaction sn-glycerol 3-phosphate + NAD(+) = dihydroxyacetone phosphate + NADH + H(+). It carries out the reaction sn-glycerol 3-phosphate + NADP(+) = dihydroxyacetone phosphate + NADPH + H(+). It functions in the pathway membrane lipid metabolism; glycerophospholipid metabolism. In terms of biological role, catalyzes the reduction of the glycolytic intermediate dihydroxyacetone phosphate (DHAP) to sn-glycerol 3-phosphate (G3P), the key precursor for phospholipid synthesis. In Legionella pneumophila (strain Corby), this protein is Glycerol-3-phosphate dehydrogenase [NAD(P)+].